The following is a 62-amino-acid chain: Large ribosomal subunit protein uL30 (62 aa).

This sequence belongs to the universal ribosomal protein uL30 family. As to quaternary structure, part of the 50S ribosomal subunit.

This is Large ribosomal subunit protein uL30 from Geobacillus thermodenitrificans (strain NG80-2).